Consider the following 88-residue polypeptide: Large ribosomal subunit protein bL27 (88 aa).

Residues 1–23 are disordered; the sequence is MAHKKAGGSSRNGRDSAGRRLGV.

The protein belongs to the bacterial ribosomal protein bL27 family.

The protein is Large ribosomal subunit protein bL27 of Methylorubrum extorquens (strain CM4 / NCIMB 13688) (Methylobacterium extorquens).